Here is a 507-residue protein sequence, read N- to C-terminus: Wax ester synthase/diacylglycerol acyltransferase 5 (507 aa).

At 1–211 (MEIKIRRRRG…LKTSSRCYSR (211 aa)) the chain is on the cytoplasmic side. His-161 functions as the Proton acceptor in the catalytic mechanism. A helical membrane pass occupies residues 212-232 (FFWLVMVLWSAALLVLNTVCD). The Lumenal segment spans residues 233 to 507 (ALEFIATALF…VVVQERTSTQ (275 aa)). N-linked (GlcNAc...) asparagine glycans are attached at residues Asn-314 and Asn-421.

It in the N-terminal section; belongs to the long-chain O-acyltransferase family. As to expression, mostly expressed in flowers and siliques.

The protein resides in the cell membrane. It is found in the endoplasmic reticulum membrane. The enzyme catalyses a long chain fatty alcohol + a fatty acyl-CoA = a wax ester + CoA. The catalysed reaction is an acyl-CoA + a 1,2-diacyl-sn-glycerol = a triacyl-sn-glycerol + CoA. Its pathway is glycerolipid metabolism; triacylglycerol biosynthesis. The protein operates within lipid metabolism. Bifunctional wax ester synthase/diacylglycerol acyltransferase. Involved in cuticular wax biosynthesis. This is Wax ester synthase/diacylglycerol acyltransferase 5 from Arabidopsis thaliana (Mouse-ear cress).